The chain runs to 761 residues: Prolyl endopeptidase FAP (761 aa).

Over 1–4 (MKTW) the chain is Cytoplasmic. A helical; Signal-anchor for type II membrane protein transmembrane segment spans residues 5-25 (LKTVFGVTTLAALALVVICIV). Residues 26–761 (LRPSRVYKPE…FLKQCFSLSD (736 aa)) lie on the Extracellular side of the membrane. N-linked (GlcNAc...) asparagine glycans are attached at residues Asn49, Asn92, and Asn99. Residues Glu203 and Glu204 each contribute to the substrate site. N-linked (GlcNAc...) asparagine glycosylation is found at Asn227 and Asn314. Disulfide bonds link Cys321–Cys332, Cys438–Cys441, and Cys448–Cys466. Ser624 serves as the catalytic Charge relay system. Cys643 and Cys756 are disulfide-bonded. N-linked (GlcNAc...) asparagine glycosylation occurs at Asn679. Residues Asp702 and His734 each act as charge relay system in the active site.

Belongs to the peptidase S9B family. As to quaternary structure, homodimer; homodimerization is required for activity of both plasma membrane and soluble forms. The monomer is inactive. Heterodimer with DPP4. Interacts with PLAUR; the interaction occurs at the cell surface of invadopodia membranes. Interacts with ITGB1. Interacts with ITGA3. Associates with integrin alpha-3/beta-1; the association occurs in a collagen-dependent manner at the cell surface of invadopodia membranes. In terms of processing, N-glycosylated. The N-terminus may be blocked. In terms of tissue distribution, expressed strongly in uterus, pancreas, submaxillary gland and skin, less in lymph node, ovary, skeletal muscle, adrenal and bone marrow. Expressed in reactive stromal fibroblast in epithelial cancers. Expressed in melanocytes but not melanomas (at protein level). Detected in fibroblasts, in placenta, uterus, embryos from day 7-19 and in newborn mice (P1).

The protein localises to the cell surface. It localises to the cell membrane. The protein resides in the cell projection. It is found in the lamellipodium membrane. Its subcellular location is the invadopodium membrane. The protein localises to the ruffle membrane. It localises to the membrane. The protein resides in the secreted. The enzyme catalyses Hydrolysis of Pro-|-Xaa &gt;&gt; Ala-|-Xaa in oligopeptides.. It catalyses the reaction Release of an N-terminal dipeptide, Xaa-Yaa-|-Zaa-, from a polypeptide, preferentially when Yaa is Pro, provided Zaa is neither Pro nor hydroxyproline.. Its activity is regulated as follows. Gelatinase activity is inhibited by serine-protease inhibitors, such as phenylmethylsulfonyl fluoride (PMSF), 4-(2-aminoethyl)-benzenesulfonyl fluoride hydrochloride (AEBSF), 4-amidino phenylsulfonyl fluoride (APSF) and diisopropyl fluorophosphate (DFP), N-ethylmaleimide (NEM) and phenylmethylsulfonyl fluoride (PMSF). Dipeptidyl peptidase activity is inhibited by 2,2'-azino-bis(3-ethylbenzthiazoline-6-sulfonic acid), diisopropylfluorophosphate (DFP). Prolyl endopeptidase activity is inhibited by the boronic acid peptide Ac-Gly-BoroPro, Ac-Gly-Pro-chloromethyl ketone and Thr-Ser-Gly-chloromethyl ketone. Its function is as follows. Cell surface glycoprotein serine protease that participates in extracellular matrix degradation and involved in many cellular processes including tissue remodeling, fibrosis, wound healing, inflammation and tumor growth. Both plasma membrane and soluble forms exhibit post-proline cleaving endopeptidase activity, with a marked preference for Ala/Ser-Gly-Pro-Ser/Asn/Ala consensus sequences, on substrate such as alpha-2-antiplasmin SERPINF2 and SPRY2. Degrade also gelatin, heat-denatured type I collagen, but not native collagen type I and IV, vibronectin, tenascin, laminin, fibronectin, fibrin or casein. Also has dipeptidyl peptidase activity, exhibiting the ability to hydrolyze the prolyl bond two residues from the N-terminus of synthetic dipeptide substrates provided that the penultimate residue is proline, with a preference for Ala-Pro, Ile-Pro, Gly-Pro, Arg-Pro and Pro-Pro. Natural neuropeptide hormones for dipeptidyl peptidase are the neuropeptide Y (NPY), peptide YY (PYY), substance P (TAC1) and brain natriuretic peptide 32 (NPPB). The plasma membrane form, in association with either DPP4, PLAUR or integrins, is involved in the pericellular proteolysis of the extracellular matrix (ECM), and hence promotes cell adhesion, migration and invasion through the ECM. Plays a role in tissue remodeling during development and wound healing. Participates in the cell invasiveness towards the ECM in malignant melanoma cancers. Enhances tumor growth progression by increasing angiogenesis, collagen fiber degradation and apoptosis and by reducing antitumor response of the immune system. Promotes glioma cell invasion through the brain parenchyma by degrading the proteoglycan brevican. Acts as a tumor suppressor in melanocytic cells through regulation of cell proliferation and survival in a serine protease activity-independent manner. The polypeptide is Prolyl endopeptidase FAP (Mus musculus (Mouse)).